We begin with the raw amino-acid sequence, 235 residues long: Exosome complex component RRP46 (235 aa).

The tract at residues 1–21 (MEGAKRADANLLTDTGTESSP) is disordered. Polar residues predominate over residues 12–21 (LTDTGTESSP). Serine 20 and serine 23 each carry phosphoserine.

The protein belongs to the RNase PH family. Homodimer. Component of the RNA exosome core complex (Exo-9), composed of EXOSC1, EXOSC2, EXOSC3, EXOSC4, EXOSC5, EXOSC6, EXOSC7, EXOSC8 and EXOSC9; within the complex interacts with EXOSC3, EXOSC8, and EXOSC9. The catalytically inactive RNA exosome core complex (Exo-9) associates with the catalytic subunit EXOSC10/RRP6. Exo-9 may associate with DIS3 to form the nucleolar exosome complex, or DIS3L to form the cytoplasmic exosome complex. Exo-9 is formed by a hexameric base ring consisting of the heterodimers EXOSC4-EXOSC9, EXOSC5-EXOSC8 and EXOSC6-EXOSC7, and a cap ring consisting of EXOSC1, EXOSC2 and EXOSC3. The RNA exosome complex associates with cofactors C1D/RRP47, MPHOSPH6/MPP6 and MTREX/MTR4. Interacts with GTPBP1. Interacts with ZC3HAV1. Interacts with DDX17 only in the presence of ZC3HAV1 in an RNA-independent manner.

It is found in the nucleus. It localises to the nucleolus. The protein resides in the cytoplasm. Non-catalytic component of the RNA exosome complex which has 3'-&gt;5' exoribonuclease activity and participates in a multitude of cellular RNA processing and degradation events. In the nucleus, the RNA exosome complex is involved in proper maturation of stable RNA species such as rRNA, snRNA and snoRNA, in the elimination of RNA processing by-products and non-coding 'pervasive' transcripts, such as antisense RNA species and promoter-upstream transcripts (PROMPTs), and of mRNAs with processing defects, thereby limiting or excluding their export to the cytoplasm. The RNA exosome may be involved in Ig class switch recombination (CSR) and/or Ig variable region somatic hypermutation (SHM) by targeting AICDA deamination activity to transcribed dsDNA substrates. In the cytoplasm, the RNA exosome complex is involved in general mRNA turnover and specifically degrades inherently unstable mRNAs containing AU-rich elements (AREs) within their 3' untranslated regions, and in RNA surveillance pathways, preventing translation of aberrant mRNAs. It seems to be involved in degradation of histone mRNA. The catalytic inactive RNA exosome core complex of 9 subunits (Exo-9) is proposed to play a pivotal role in the binding and presentation of RNA for ribonucleolysis, and to serve as a scaffold for the association with catalytic subunits and accessory proteins or complexes. In vitro, EXOSC5 does not bind or digest single-stranded RNA and binds to double-stranded DNA without detectable DNase activity. The chain is Exosome complex component RRP46 (Exosc5) from Mus musculus (Mouse).